Consider the following 101-residue polypeptide: MAKLSSVNKNERRKKLVKKYAGRYAKLKAIAADSSLDDGERLIARLKMAEIPRNGNPTRIRNRCELTGRPRAYYRKFRLCRVQLRDLANKGLIPGVVKSSW.

The protein belongs to the universal ribosomal protein uS14 family. Part of the 30S ribosomal subunit. Contacts proteins S3 and S10.

Functionally, binds 16S rRNA, required for the assembly of 30S particles and may also be responsible for determining the conformation of the 16S rRNA at the A site. This chain is Small ribosomal subunit protein uS14, found in Sphingopyxis alaskensis (strain DSM 13593 / LMG 18877 / RB2256) (Sphingomonas alaskensis).